Here is a 342-residue protein sequence, read N- to C-terminus: GTPase Obg (342 aa).

An Obg domain is found at 1 to 159; sequence MKFIDEAKIY…RWIRLELKLL (159 aa). The 173-residue stretch at 160 to 332 folds into the OBG-type G domain; it reads ADVGIIGLPN…LLYKIGEALK (173 aa). GTP is bound by residues 166 to 173, 191 to 195, 214 to 217, 284 to 287, and 313 to 315; these read GLPNVGKS, FTTLT, DIPG, NKTD, and SAA. Mg(2+) is bound by residues Ser173 and Thr193.

Belongs to the TRAFAC class OBG-HflX-like GTPase superfamily. OBG GTPase family. In terms of assembly, monomer. It depends on Mg(2+) as a cofactor.

Its subcellular location is the cytoplasm. In terms of biological role, an essential GTPase which binds GTP, GDP and possibly (p)ppGpp with moderate affinity, with high nucleotide exchange rates and a fairly low GTP hydrolysis rate. Plays a role in control of the cell cycle, stress response, ribosome biogenesis and in those bacteria that undergo differentiation, in morphogenesis control. This is GTPase Obg from Syntrophus aciditrophicus (strain SB).